Consider the following 49-residue polypeptide: MGMKKKTNIKATGGLYIFGPSNRNEGKDLTPTIRLLEEKIKQMERMLSA.

This is an uncharacterized protein from Bacillus subtilis (strain 168).